Here is a 438-residue protein sequence, read N- to C-terminus: Protein ROOT INITIATION DEFECTIVE 3 (438 aa).

WD repeat units lie at residues 36 to 74 (AHGLTAVGEKFLASSQLSARNTSGSIFYWSWTKPQAEVK), 76 to 115 (YPVEPIKALAANNEGTYLVGGGISGDIYLWEVATGKLLKK), 118 to 157 (GHYRSVTCLVFSGDDSLLVSGSQDGSIRVWSLIRLFDDFQ), 171 to 212 (EHTM…LLKN), 214 to 253 (IFPSVINALALDPGGCVFYAGARDSKIYIGAINATSEYGT), and 261 to 300 (EKGKAITCLAYCADGNLLISGSEDGVVCVWDPKSLRHVRT). The stretch at 394–434 (AATEMEMERLKLEYKRSLQMNEQWQKNYENLLQVVMEEEQI) forms a coiled coil.

Its function is as follows. Involved in meristem development. Acts as a negative regulator of the CUC-STM pathway in shoot apical meristem (SAM) neo-formation. This is Protein ROOT INITIATION DEFECTIVE 3 (RID3) from Arabidopsis thaliana (Mouse-ear cress).